Reading from the N-terminus, the 512-residue chain is Serine--tRNA ligase, cytoplasmic (512 aa).

The residue at position 1 (Met-1) is an N-acetylmethionine. The tract at residues 9-61 is interaction with tRNA; it reads RVDKGGDPALIRETQEKRFKDPGLVDQLVKADSEWRRCRFRADNLNKLKNLCS. Ser-241 bears the Phosphoserine mark. Residues Thr-271 and Arg-302 each contribute to the L-serine site. ATP is bound by residues 302–304 and 318–321; these read RQE and VHQF. Lys-323 bears the N6-acetyllysine mark. Glu-325 provides a ligand contact to L-serine. 391-394 contacts ATP; the sequence is ELVS. Asn-427 is a binding site for L-serine. Residues 472–512 are disordered; that stretch reads KPAPIDQEPSKKQKKQHEGSKKKAKEVTLENQLQNMEVTEA. Over residues 479–499 the composition is skewed to basic and acidic residues; the sequence is EPSKKQKKQHEGSKKKAKEVT. The Nuclear localization signal motif lies at 482–494; sequence KKQKKQHEGSKKK. Residues 500-512 are compositionally biased toward polar residues; it reads LENQLQNMEVTEA.

It belongs to the class-II aminoacyl-tRNA synthetase family. Type-1 seryl-tRNA synthetase subfamily. In terms of assembly, homodimer. The tRNA molecule may bind across the dimer. Interacts with SIRT2. Interacts with METTL6; interaction is required for the tRNA N(3)-methylcytidine methyltransferase activity of METTL6.

The protein localises to the cytoplasm. It localises to the nucleus. The catalysed reaction is tRNA(Ser) + L-serine + ATP = L-seryl-tRNA(Ser) + AMP + diphosphate + H(+). The enzyme catalyses tRNA(Sec) + L-serine + ATP = L-seryl-tRNA(Sec) + AMP + diphosphate + H(+). It functions in the pathway aminoacyl-tRNA biosynthesis; selenocysteinyl-tRNA(Sec) biosynthesis; L-seryl-tRNA(Sec) from L-serine and tRNA(Sec): step 1/1. In terms of biological role, catalyzes the attachment of serine to tRNA(Ser) in a two-step reaction: serine is first activated by ATP to form Ser-AMP and then transferred to the acceptor end of tRNA(Ser). Is probably also able to aminoacylate tRNA(Sec) with serine, to form the misacylated tRNA L-seryl-tRNA(Sec), which will be further converted into selenocysteinyl-tRNA(Sec). In the nucleus, binds to the VEGFA core promoter and prevents MYC binding and transcriptional activation by MYC. Recruits SIRT2 to the VEGFA promoter, promoting deacetylation of histone H4 at 'Lys-16' (H4K16). Thereby, inhibits the production of VEGFA and sprouting angiogenesis mediated by VEGFA. The protein is Serine--tRNA ligase, cytoplasmic (Sars1) of Rattus norvegicus (Rat).